Here is a 403-residue protein sequence, read N- to C-terminus: Synaptotagmin-7 (403 aa).

Residues 1–16 (MYRDPEAASPGAPSRD) are Vesicular-facing. A helical membrane pass occupies residues 17–37 (VLLVSAIITVSLSVTVVLCGL). The Cytoplasmic segment spans residues 38–403 (CHWCQRKLGK…PVAQWHQLKA (366 aa)). Position 52 is a phosphoserine (S52). Residues 53–106 (LETVGTPDSGRGRSEKKAIKLPAGGKAVNTAPVPGQTPHDESDRRTEPRSSVSD) are disordered. The residue at position 58 (T58) is a Phosphothreonine. S61 carries the post-translational modification Phosphoserine. Positions 90–100 (PHDESDRRTEP) are enriched in basic and acidic residues. 2 positions are modified to phosphoserine: S119 and S122. 2 C2 domains span residues 135-255 (NLGR…TFWK) and 266-399 (SRGE…AQWH). Residues D166, D172, D225, D227, S230, D233, D297, D303, D357, D359, S362, and D365 each contribute to the Ca(2+) site.

This sequence belongs to the synaptotagmin family. Homodimer. Can also form heterodimers with SYT6, SYT9 and SYT10. Interacts with calmodulin (CALM1, CALM2 or CALM3). Interacts with CD63; required for localization to lysosomes. Interacts with APP. Ca(2+) serves as cofactor. In terms of processing, palmitoylated at its vesicular N-terminus; palmitoylation is required for localization to lysosome and phagocytosis in macrophages. Expressed in a variety of adult and fetal tissues.

Its subcellular location is the cell membrane. The protein localises to the presynaptic cell membrane. It localises to the cytoplasmic vesicle. It is found in the secretory vesicle. The protein resides in the synaptic vesicle membrane. Its subcellular location is the lysosome membrane. The protein localises to the phagosome membrane. It localises to the peroxisome membrane. It is found in the secretory vesicle membrane. Ca(2+) sensor involved in Ca(2+)-dependent exocytosis of secretory and synaptic vesicles through Ca(2+) and phospholipid binding to the C2 domain. Ca(2+) induces binding of the C2-domains to phospholipid membranes and to assembled SNARE-complexes; both actions contribute to triggering exocytosis. SYT7 binds Ca(2+) with high affinity and slow kinetics compared to other synaptotagmins. Involved in Ca(2+)-triggered lysosomal exocytosis, a major component of the plasma membrane repair. Ca(2+)-regulated delivery of lysosomal membranes to the cell surface is also involved in the phagocytic uptake of particles by macrophages. Ca(2+)-triggered lysosomal exocytosis also plays a role in bone remodeling by regulating secretory pathways in osteoclasts and osteoblasts. In case of infection, involved in participates cell invasion by Trypanosoma cruzi via Ca(2+)-triggered lysosomal exocytosis. Involved in cholesterol transport from lysosome to peroxisome by promoting membrane contacts between lysosomes and peroxisomes: probably acts by promoting vesicle fusion by binding phosphatidylinositol-4,5-bisphosphate on peroxisomal membranes. Acts as a key mediator of synaptic facilitation, a process also named short-term synaptic potentiation: synaptic facilitation takes place at synapses with a low initial release probability and is caused by influx of Ca(2+) into the axon terminal after spike generation, increasing the release probability of neurotransmitters. Probably mediates synaptic facilitation by directly increasing the probability of release. May also contribute to synaptic facilitation by regulating synaptic vesicle replenishment, a process required to ensure that synaptic vesicles are ready for the arrival of the next action potential: SYT7 is required for synaptic vesicle replenishment by acting as a sensor for Ca(2+) and by forming a complex with calmodulin. Also acts as a regulator of Ca(2+)-dependent insulin and glucagon secretion in beta-cells. Triggers exocytosis by promoting fusion pore opening and fusion pore expansion in chromaffin cells. Also regulates the secretion of some non-synaptic secretory granules of specialized cells. This chain is Synaptotagmin-7, found in Homo sapiens (Human).